Reading from the N-terminus, the 1399-residue chain is DNA-directed RNA polymerase subunit beta' (1399 aa).

Zn(2+) contacts are provided by Cys-70, Cys-72, Cys-85, and Cys-88. Asp-460, Asp-462, and Asp-464 together coordinate Mg(2+). Residues Cys-814, Cys-888, Cys-895, and Cys-898 each coordinate Zn(2+).

It belongs to the RNA polymerase beta' chain family. In terms of assembly, the RNAP catalytic core consists of 2 alpha, 1 beta, 1 beta' and 1 omega subunit. When a sigma factor is associated with the core the holoenzyme is formed, which can initiate transcription. It depends on Mg(2+) as a cofactor. Zn(2+) serves as cofactor.

It catalyses the reaction RNA(n) + a ribonucleoside 5'-triphosphate = RNA(n+1) + diphosphate. Its function is as follows. DNA-dependent RNA polymerase catalyzes the transcription of DNA into RNA using the four ribonucleoside triphosphates as substrates. The sequence is that of DNA-directed RNA polymerase subunit beta' from Pseudomonas entomophila (strain L48).